The primary structure comprises 390 residues: Two-component response regulator ORR29 (390 aa).

Residues 13–130 form the Response regulatory domain; the sequence is SAMVIDEDKC…TIKNLWQYVD (118 aa). At Asp-65 the chain carries 4-aspartylphosphate. The myb-like GARP DNA-binding region spans 169–226; it reads KKYYLMWTPHLQKKFLHALQILGKDASPKNIKKIMGVDNIDCRQIAAHLQKHRLRLTK. 2 disordered regions span residues 233-271 and 303-339; these read FTTDTSKDESNSRIGPAESHHVCRNASTLQPRSNTQPTE and SKHSSDPSGDEDEQVVVGGDQDGCANEANDIDSSGDH. The span at 257-271 shows a compositional bias: polar residues; the sequence is NASTLQPRSNTQPTE.

This sequence belongs to the ARR family. Type-B subfamily. In terms of processing, two-component system major event consists of a His-to-Asp phosphorelay between a sensor histidine kinase (HK) and a response regulator (RR). In plants, the His-to-Asp phosphorelay involves an additional intermediate named Histidine-containing phosphotransfer protein (HPt). This multistep phosphorelay consists of a His-Asp-His-Asp sequential transfer of a phosphate group between first a His and an Asp of the HK protein, followed by the transfer to a conserved His of the HPt protein and finally the transfer to an Asp in the receiver domain of the RR protein.

The protein resides in the cytoplasm. It is found in the cytosol. It localises to the nucleus. Transcriptional activator that binds specific DNA sequence. Functions as a response regulator involved in His-to-Asp phosphorelay signal transduction system. Phosphorylation of the Asp residue in the receiver domain activates the ability of the protein to promote the transcription of target genes. May directly activate some type-A response regulators in response to cytokinins. Functions as a response regulator in response to cytokinins. The protein is Two-component response regulator ORR29 of Oryza sativa subsp. japonica (Rice).